The primary structure comprises 265 residues: Apolipoprotein A-I (265 aa).

An N-terminal signal peptide occupies residues 1–18; that stretch reads MKAVLLTLAVLFLTGSQA. 2 consecutive repeat copies span residues 67-88 and 89-110. Residues 67–265 form a 10 X approximate tandem repeats region; that stretch reads LKLLDNWDSL…DEASKKLNAQ (199 aa). Met-109 bears the Methionine sulfoxide mark. The stretch at 111-121 is one 3; half-length repeat; it reads KDLEEVKQKVQ. 5 repeat units span residues 122 to 142, 144 to 165, 166 to 187, 188 to 209, and 210 to 230. The 9; half-length repeat unit spans residues 231–241; that stretch reads PALEDLRQGLV. Residues 242 to 265 form repeat 10; that stretch reads PVLESLKVSILAAIDEASKKLNAQ.

It belongs to the apolipoprotein A1/A4/E family. As to quaternary structure, homodimer. Interacts with APOA1BP and CLU. Component of a sperm activating protein complex (SPAP), consisting of APOA1, an immunoglobulin heavy chain, an immunoglobulin light chain and albumin. Interacts with NDRG1. Interacts with SCGB3A2. Interacts with NAXE and YJEFN3. Glycosylated. Post-translationally, palmitoylated. In terms of processing, phosphorylation sites are present in the extracellular medium. As to expression, major protein of plasma HDL, also found in chylomicrons.

The protein localises to the secreted. Participates in the reverse transport of cholesterol from tissues to the liver for excretion by promoting cholesterol efflux from tissues and by acting as a cofactor for the lecithin cholesterol acyltransferase (LCAT). As part of the SPAP complex, activates spermatozoa motility. This is Apolipoprotein A-I (APOA1) from Tursiops truncatus (Atlantic bottle-nosed dolphin).